We begin with the raw amino-acid sequence, 116 residues long: Protein Rev (116 aa).

The residue at position 8 (serine 8) is a Phosphoserine; by host CK2. The segment at 18–26 (LIKSLYQSN) is homomultimerization. Disordered regions lie at residues 20 to 46 (KSLYQSNPPPSPEGTRQARRNRRRRWR) and 84 to 116 (DSSEDCGTSGTQGVGSPQVLVESPAVLESGAKE). Residues 34-50 (TRQARRNRRRRWRERQR) carry the Nuclear localization signal and RNA-binding (RRE) motif. A compositionally biased stretch (basic residues) spans 36–46 (QARRNRRRRWR). A Nuclear export signal and binding to XPO1 motif is present at residues 73 to 84 (LQLPPLERLTLD). Positions 88–98 (DCGTSGTQGVG) are enriched in polar residues. Serine 92 and serine 99 each carry phosphoserine; by host.

It belongs to the HIV-1 REV protein family. As to quaternary structure, homomultimer; when bound to the RRE. Multimeric assembly is essential for activity and may involve XPO1. Binds to human KPNB1, XPO1, TNPO1, RANBP5 and IPO7. Interacts with the viral Integrase. Interacts with human KHDRBS1. Interacts with human NAP1; this interaction decreases Rev multimerization and stimulates its activity. Interacts with human DEAD-box helicases DDX3 and DDX24; these interactions may serve for viral RNA export to the cytoplasm and packaging, respectively. Interacts with human PSIP1; this interaction may inhibit HIV-1 DNA integration by promoting dissociation of the Integrase-LEDGF/p75 complex. In terms of processing, asymmetrically arginine dimethylated at one site by host PRMT6. Methylation impairs the RNA-binding activity and export of viral RNA from the nucleus to the cytoplasm. Phosphorylated by protein kinase CK2. Presence of, and maybe binding to the N-terminus of the regulatory beta subunit of CK2 is necessary for CK2-mediated Rev's phosphorylation.

It is found in the host nucleus. It localises to the host nucleolus. The protein resides in the host cytoplasm. In terms of biological role, escorts unspliced or incompletely spliced viral pre-mRNAs (late transcripts) out of the nucleus of infected cells. These pre-mRNAs carry a recognition sequence called Rev responsive element (RRE) located in the env gene, that is not present in fully spliced viral mRNAs (early transcripts). This function is essential since most viral proteins are translated from unspliced or partially spliced pre-mRNAs which cannot exit the nucleus by the pathway used by fully processed cellular mRNAs. Rev itself is translated from a fully spliced mRNA that readily exits the nucleus. Rev's nuclear localization signal (NLS) binds directly to KPNB1/Importin beta-1 without previous binding to KPNA1/Importin alpha-1. KPNB1 binds to the GDP bound form of RAN (Ran-GDP) and targets Rev to the nucleus. In the nucleus, the conversion from Ran-GDP to Ran-GTP dissociates Rev from KPNB1 and allows Rev's binding to the RRE in viral pre-mRNAs. Rev multimerization on the RRE via cooperative assembly exposes its nuclear export signal (NES) to the surface. Rev can then form a complex with XPO1/CRM1 and Ran-GTP, leading to nuclear export of the complex. Conversion from Ran-GTP to Ran-GDP mediates dissociation of the Rev/RRE/XPO1/RAN complex, so that Rev can return to the nucleus for a subsequent round of export. Beside KPNB1, also seems to interact with TNPO1/Transportin-1, RANBP5/IPO5 and IPO7/RANBP7 for nuclear import. The nucleoporin-like HRB/RIP is an essential cofactor that probably indirectly interacts with Rev to release HIV RNAs from the perinuclear region to the cytoplasm. This is Protein Rev from Human immunodeficiency virus type 1 group M subtype B (isolate RF/HAT3) (HIV-1).